Reading from the N-terminus, the 99-residue chain is NADH-quinone oxidoreductase subunit K (99 aa).

3 consecutive transmembrane segments (helical) span residues Pro-3–Leu-23, Ile-28–Phe-48, and Met-59–Ile-79.

Belongs to the complex I subunit 4L family. In terms of assembly, NDH-1 is composed of 14 different subunits. Subunits NuoA, H, J, K, L, M, N constitute the membrane sector of the complex.

It localises to the cell membrane. It carries out the reaction a quinone + NADH + 5 H(+)(in) = a quinol + NAD(+) + 4 H(+)(out). Its function is as follows. NDH-1 shuttles electrons from NADH, via FMN and iron-sulfur (Fe-S) centers, to quinones in the respiratory chain. The immediate electron acceptor for the enzyme in this species is believed to be a menaquinone. Couples the redox reaction to proton translocation (for every two electrons transferred, four hydrogen ions are translocated across the cytoplasmic membrane), and thus conserves the redox energy in a proton gradient. The sequence is that of NADH-quinone oxidoreductase subunit K from Mycobacterium avium (strain 104).